The primary structure comprises 787 residues: Endonuclease MutS2 (787 aa).

336–343 contacts ATP; it reads GPNTGGKT. A Smr domain is found at 712 to 787; sequence LDLRGVRYED…GNGATEVQFK (76 aa).

Belongs to the DNA mismatch repair MutS family. MutS2 subfamily. In terms of assembly, homodimer. Binds to stalled ribosomes, contacting rRNA.

Its function is as follows. Endonuclease that is involved in the suppression of homologous recombination and thus may have a key role in the control of bacterial genetic diversity. Functionally, acts as a ribosome collision sensor, splitting the ribosome into its 2 subunits. Detects stalled/collided 70S ribosomes which it binds and splits by an ATP-hydrolysis driven conformational change. Acts upstream of the ribosome quality control system (RQC), a ribosome-associated complex that mediates the extraction of incompletely synthesized nascent chains from stalled ribosomes and their subsequent degradation. Probably generates substrates for RQC. In Lactiplantibacillus plantarum (strain ATCC BAA-793 / NCIMB 8826 / WCFS1) (Lactobacillus plantarum), this protein is Endonuclease MutS2.